The primary structure comprises 517 residues: MSGSCSSRKCFSVPATSLCSTEVSCGGPICLPSSCQSQTWQLVTCQDSCGSSSCGPQCRQPSCPVSSCAQPLCCDPVICEPSCSVSSGCQPVCCEATTCEPSCSVSNCYQPVCFEATICEPSCSVSNCCQPVCFEATVCEPSCSVSSCAQPVCCEPAICEPSCSVSSCCQPVGSEATSCQPVLCVPTSCQPVLCKSSCCQPVVCEPSCCSAVCTLPSSCQPVVCEPSCCQPVCPTPTCSVTSSCQAVCCDPSPCEPSCSESSICQPATCVALVCEPVCLRPVCCVQSSCEPPSVPSTCQEPSCCVSSICQPICSEPSPCSPAVCVSSPCQPTCYVVKRCPSVCPEPVSCPSTSCRPLSCSPGSSASAICRPTCPRTFYIPSSSKRPCSATISYRPVSRPICRPICSGLLTYRQPYMTSISYRPACYRPCYSILRRPACVTSYSCRPVYFRPSCTESDSCKRDCKKSTSSQLDCVDTTPCKVDVSEEAPCQPTEAKPISPTTREAAAAQPAASKPANC.

11 repeat units span residues 73–77, 93–97, 128–132, 153–157, 168–172, 198–202, 208–212, 228–232, 248–252, 283–287, and 303–307. The tract at residues 73–307 is 11 X 5 AA repeats of C-C-X(3); it reads CCDPVICEPS…CQEPSCCVSS (235 aa). The tract at residues 483-517 is disordered; that stretch reads VSEEAPCQPTEAKPISPTTREAAAAQPAASKPANC. Residues 504–517 are compositionally biased toward low complexity; the sequence is AAAAQPAASKPANC.

This sequence belongs to the KRTAP type 16 family.

This Homo sapiens (Human) protein is Keratin-associated protein 16-1 (KRTAP16-1).